The sequence spans 265 residues: Methylthioribulose-1-phosphate dehydratase (265 aa).

Residue Cys118 coordinates substrate. Residues His136 and His138 each contribute to the Zn(2+) site. Glu161 functions as the Proton donor/acceptor in the catalytic mechanism. His226 is a binding site for Zn(2+).

Belongs to the aldolase class II family. MtnB subfamily. The cofactor is Zn(2+).

The protein localises to the cytoplasm. The enzyme catalyses 5-(methylsulfanyl)-D-ribulose 1-phosphate = 5-methylsulfanyl-2,3-dioxopentyl phosphate + H2O. Its pathway is amino-acid biosynthesis; L-methionine biosynthesis via salvage pathway; L-methionine from S-methyl-5-thio-alpha-D-ribose 1-phosphate: step 2/6. Functionally, catalyzes the dehydration of methylthioribulose-1-phosphate (MTRu-1-P) into 2,3-diketo-5-methylthiopentyl-1-phosphate (DK-MTP-1-P). This is Methylthioribulose-1-phosphate dehydratase from Scheffersomyces stipitis (strain ATCC 58785 / CBS 6054 / NBRC 10063 / NRRL Y-11545) (Yeast).